Here is a 329-residue protein sequence, read N- to C-terminus: MVREKVKVSTSTRTRQWKCVESRTDSKRLYYGRFILSPLMKGQADTIGIAMRRALLGELEGTCITRAKSEKIPHEYSTIVGIQESVHEILMNLKEIVLRGNLYGTRNAFICAKGPGYVTAQDIILPPSVEIVDNTQHVASLTEPIDLCIGLQIERNRGYGIKTPKNFHDGSYPIDAVFMPVRNANHSIHCYGNDNEKQEILFLEIWTNGSLTPKEALHEASRNLIDLFIPFLHTEEENLHLENNQHDVTLPFFPFHDRLVKLTKKKKEIALKYIFIDQSELPPRIYNCLKKSNIHTLLDLLNNSREDLMKIEHFRIEDVKQILGILEKK.

Residues Met-1–Glu-235 are alpha N-terminal domain (alpha-NTD). Residues Ile-269–Lys-329 form an alpha C-terminal domain (alpha-CTD) region.

This sequence belongs to the RNA polymerase alpha chain family. As to quaternary structure, in plastids the minimal PEP RNA polymerase catalytic core is composed of four subunits: alpha, beta, beta', and beta''. When a (nuclear-encoded) sigma factor is associated with the core the holoenzyme is formed, which can initiate transcription.

The protein resides in the plastid. It is found in the chloroplast. The enzyme catalyses RNA(n) + a ribonucleoside 5'-triphosphate = RNA(n+1) + diphosphate. Its function is as follows. DNA-dependent RNA polymerase catalyzes the transcription of DNA into RNA using the four ribonucleoside triphosphates as substrates. The sequence is that of DNA-directed RNA polymerase subunit alpha from Gossypium hirsutum (Upland cotton).